Consider the following 264-residue polypeptide: Catenin delta-2 (264 aa).

4 ARM repeats span residues 20–59, 64–104, 120–162, and 166–211; these read NKIK…NLVY, DDNK…NLSS, LTNA…NVSS, and EARR…NLSY. Positions 238–264 are disordered; that stretch reads GKDAESSGCWGKKKKKKKSQDQWDGVG.

It belongs to the beta-catenin family. Binds to E-cadherin at a juxtamembrane site within the cytoplasmic domain. Binds to PSEN1. Interacts with ZBTB33. Interacts with ARHGEF28. Interacts (via the extreme C-terminus) with FRMPD2 (via the PDZ 2 domain). Interacts with PDZD2. Interacts with CDK5. Interacts with CTNBB1. Interacts with GSK3A and GSK3B. Interacts with DNM2. Interacts with CCDC85B. O-glycosylated. Post-translationally, phosphorylated by CDK5. Phosphorylated by GSK3B. As to expression, predominantly expressed in brain; accumulates in cortical neurons (at protein level).

The protein localises to the nucleus. Its subcellular location is the cell junction. It localises to the adherens junction. It is found in the cell projection. The protein resides in the dendrite. The protein localises to the perikaryon. Its function is as follows. Has a critical role in neuronal development, particularly in the formation and/or maintenance of dendritic spines and synapses. Involved in the regulation of canonical Wnt signaling. It probably acts on beta-catenin turnover, facilitating beta-catenin interaction with GSK3B, phosphorylation, ubiquitination and degradation. May be involved in neuronal cell adhesion and tissue morphogenesis and integrity by regulating adhesion molecules. Functions as a transcriptional activator when bound to ZBTB33. This chain is Catenin delta-2 (Ctnnd2), found in Rattus norvegicus (Rat).